A 357-amino-acid chain; its full sequence is DNA integrity scanning protein DisA (357 aa).

Residues 3 to 141 enclose the DAC domain; that stretch reads RPTLRETVAR…GGERHVVADS (139 aa). ATP is bound by residues glycine 70, leucine 88, and 101–105; that span reads TRHRS.

The protein belongs to the DisA family. In terms of assembly, homooctamer. Mg(2+) serves as cofactor.

The enzyme catalyses 2 ATP = 3',3'-c-di-AMP + 2 diphosphate. In terms of biological role, participates in a DNA-damage check-point. DisA forms globular foci that rapidly scan along the chromosomes searching for lesions. Its function is as follows. Also has diadenylate cyclase activity, catalyzing the condensation of 2 ATP molecules into cyclic di-AMP (c-di-AMP). c-di-AMP likely acts as a signaling molecule that may couple DNA integrity with a cellular process. The chain is DNA integrity scanning protein DisA from Mycobacterium avium (strain 104).